The following is a 316-amino-acid chain: Glutathione synthetase (316 aa).

The ATP-grasp domain maps to 125 to 310; it reads KLFTAWFSDL…ITGMLMDAIE (186 aa). 151–207 is an ATP binding site; that stretch reads WEKHSDIILKPLDGMGGASIFRVKEGDPNLGVIAETLTEHGTRYCMAQNYLPAIKDG. Glutamate 281 and asparagine 283 together coordinate Mg(2+).

Belongs to the prokaryotic GSH synthase family. Mg(2+) is required as a cofactor. The cofactor is Mn(2+).

The enzyme catalyses gamma-L-glutamyl-L-cysteine + glycine + ATP = glutathione + ADP + phosphate + H(+). It participates in sulfur metabolism; glutathione biosynthesis; glutathione from L-cysteine and L-glutamate: step 2/2. The chain is Glutathione synthetase from Escherichia coli O6:H1 (strain CFT073 / ATCC 700928 / UPEC).